The chain runs to 118 residues: Large ribosomal subunit protein uL22c (118 aa).

The protein belongs to the universal ribosomal protein uL22 family. Part of the 50S ribosomal subunit.

It localises to the plastid. The protein resides in the chloroplast. Functionally, this protein binds specifically to 23S rRNA. The globular domain of the protein is located near the polypeptide exit tunnel on the outside of the subunit, while an extended beta-hairpin is found that lines the wall of the exit tunnel in the center of the 70S ribosome. The polypeptide is Large ribosomal subunit protein uL22c (rpl22) (Rhodomonas salina (Cryptomonas salina)).